The sequence spans 395 residues: Tryptophan synthase beta chain (395 aa).

Lysine 89 is subject to N6-(pyridoxal phosphate)lysine.

The protein belongs to the TrpB family. Tetramer of two alpha and two beta chains. Requires pyridoxal 5'-phosphate as cofactor.

It catalyses the reaction (1S,2R)-1-C-(indol-3-yl)glycerol 3-phosphate + L-serine = D-glyceraldehyde 3-phosphate + L-tryptophan + H2O. It participates in amino-acid biosynthesis; L-tryptophan biosynthesis; L-tryptophan from chorismate: step 5/5. Its function is as follows. The beta subunit is responsible for the synthesis of L-tryptophan from indole and L-serine. In Fusobacterium nucleatum subsp. nucleatum (strain ATCC 25586 / DSM 15643 / BCRC 10681 / CIP 101130 / JCM 8532 / KCTC 2640 / LMG 13131 / VPI 4355), this protein is Tryptophan synthase beta chain.